Consider the following 307-residue polypeptide: Porphobilinogen deaminase (307 aa).

Cys241 carries the S-(dipyrrolylmethanemethyl)cysteine modification.

The protein belongs to the HMBS family. In terms of assembly, monomer. Dipyrromethane serves as cofactor.

It carries out the reaction 4 porphobilinogen + H2O = hydroxymethylbilane + 4 NH4(+). It participates in porphyrin-containing compound metabolism; protoporphyrin-IX biosynthesis; coproporphyrinogen-III from 5-aminolevulinate: step 2/4. Its function is as follows. Tetrapolymerization of the monopyrrole PBG into the hydroxymethylbilane pre-uroporphyrinogen in several discrete steps. This is Porphobilinogen deaminase from Coxiella burnetii (strain CbuG_Q212) (Coxiella burnetii (strain Q212)).